The primary structure comprises 298 residues: Ethanolamine ammonia-lyase small subunit (298 aa).

Adenosylcob(III)alamin-binding residues include V210, E231, and C261.

It belongs to the EutC family. In terms of assembly, the basic unit is a heterodimer which dimerizes to form tetramers. The heterotetramers trimerize; 6 large subunits form a core ring with 6 small subunits projecting outwards. Adenosylcob(III)alamin serves as cofactor.

It localises to the bacterial microcompartment. The enzyme catalyses ethanolamine = acetaldehyde + NH4(+). Its pathway is amine and polyamine degradation; ethanolamine degradation. In terms of biological role, catalyzes the deamination of various vicinal amino-alcohols to oxo compounds. Allows this organism to utilize ethanolamine as the sole source of nitrogen and carbon in the presence of external vitamin B12. The protein is Ethanolamine ammonia-lyase small subunit of Salmonella schwarzengrund (strain CVM19633).